The chain runs to 2549 residues: Serine/threonine-protein kinase mTOR (2549 aa).

Met-1 is modified (N-acetylmethionine). Residues 1–651 form an interaction with NBN region; sequence MLGTGPAVAT…HVVSQTAVQV (651 aa). 32 HEAT repeats span residues 16 to 53, 55 to 99, 100 to 137, 138 to 179, 180 to 220, 222 to 276, 277 to 313, 314 to 364, 365 to 409, 410 to 445, 446 to 494, 495 to 529, 530 to 563, 564 to 596, 597 to 636, 637 to 683, 686 to 724, 727 to 766, 769 to 811, 814 to 853, 857 to 893, 894 to 942, 943 to 988, 989 to 1027, 1029 to 1068, 1069 to 1105, 1106 to 1144, 1145 to 1188, 1189 to 1225, 1226 to 1273, 1274 to 1311, and 1312 to 1345; these read SSNV…MELR, MSQE…VEGG, NSTR…AMAG, DTFT…AISV, PTFF…LILT, QREP…RISS, MEGE…PRHI, TPFT…CCRD, LMEE…AFTD, TQYL…VAVR, SEFK…RAMG, PGIQ…RQIP, QLKK…GLAH, QLAS…EFEG, HSLT…SIHL, ISGH…DERF, HLAQ…MNPA, MPFL…NAPR, RPYM…VSGL, RKWV…STGY, PYRK…LLGA, LDPY…GNLP, LDEF…KCVQ, FLPQ…KSHI, PYMD…GEFK, LYLP…LFGA, NLDD…RLTE, SLDF…GKKY, QIFI…LADE, EEDP…GAAR, RVSK…QAYN, and PMAR…ELAL. A Phosphoserine modification is found at Ser-567. Thr-1162 carries the post-translational modification Phosphothreonine. N6-acetyllysine is present on Lys-1218. A Phosphoserine modification is found at Ser-1261. TPR repeat units lie at residues 1346 to 1382, 1383 to 1408, 1409 to 1442, 1443 to 1473, 1474 to 1507, 1508 to 1541, 1542 to 1574, 1575 to 1614, 1615 to 1649, 1650 to 1693, 1694 to 1731, 1732 to 1786, 1787 to 1846, 1898 to 1930, 1931 to 1970, and 1971 to 2005; these read TSQD…GIVL, LGER…QKGP, TPAI…HFGE, LEIQ…NKED, PELM…VNDE, TQAK…RDTH, DGAF…LDAE, LTAM…RREI, IRQI…PHED, MRTW…PTAH, PQVT…AQHA, IATE…DRSW, YKAW…STEG, NNLQ…VKAI, QIDT…YHPQ, and ALIY…SNTL. The region spanning 1382–1982 is the FAT domain; it reads LLGERAAKCR…IYPLTVASKS (601 aa). 1D-myo-inositol hexakisphosphate contacts are provided by Lys-1662, Lys-1702, and Arg-1749. Residues 1825–1860 are compositionally biased toward low complexity; that stretch reads ITNATTAATTAASAAAATSTEGSNSESEAESNENSP. The tract at residues 1825–1867 is disordered; sequence ITNATTAATTAASAAAATSTEGSNSESEAESNENSPTPSPLQK. Residues 2012–2144 are sufficient for interaction with the FKBP1A/rapamycin complex; it reads VSEELIRVAI…DLELAVPGTY (133 aa). Residue Lys-2066 forms a Glycyl lysine isopeptide (Lys-Gly) (interchain with G-Cter in ubiquitin) linkage. The 314-residue stretch at 2156–2469 folds into the PI3K/PI4K catalytic domain; that stretch reads IAPSLQVITS…GVELGEPAHK (314 aa). Phosphoserine; by TBK1 is present on Ser-2159. Positions 2162–2168 are G-loop; sequence VITSKQR. Thr-2164 bears the Phosphothreonine mark. 2 residues coordinate ATP: Ser-2165 and Gln-2167. Thr-2173 carries the phosphothreonine; by PKB/AKT1 modification. Residues Leu-2185, Lys-2187, Glu-2190, Tyr-2225, Gly-2238, Trp-2239, Val-2240, and Thr-2245 each coordinate ATP. The segment at 2258–2296 is interaction with MLST8; that stretch reads KILLNIEHRIMLRMAPDYDHLTLMQKVEVFEHAVNNTAG. Positions 2335–2343 are catalytic loop; that stretch reads GLGDRHPSN. Mg(2+) is bound at residue Asn-2343. ATP is bound by residues Met-2345 and Ile-2356. The interval 2355–2380 is activation loop; the sequence is HIDFGDCFEVAMTREKFPEKIPFRLT. Residue Asp-2357 coordinates Mg(2+). The residue at position 2446 (Thr-2446) is a Phosphothreonine; by RPS6KB1. Ser-2448 bears the Phosphoserine; by RPS6KB1 mark. Phosphoserine occurs at positions 2478 and 2481. The FATC domain occupies 2517 to 2549; that stretch reads DTLDVPTQVELLIKQATSHENLCQCYIGWCPFW.

Belongs to the PI3/PI4-kinase family. Part of the mechanistic target of rapamycin complex 1 (mTORC1) which contains MTOR, MLST8 and RPTOR. The mTORC1 complex is a 1 Md obligate dimer of two stoichiometric heterotetramers with overall dimensions of 290 A x 210 A x 135 A. It has a rhomboid shape and a central cavity, the dimeric interfaces are formed by interlocking interactions between the two MTOR and the two RPTOR subunits. The MLST8 subunit forms distal foot-like protuberances, and contacts only one MTOR within the complex, while the small AKT1S1/PRAS40 localizes to the midsection of the central core, in close proximity to RPTOR. mTORC1 associates with AKT1S1/PRAS40, which inhibits its activity by blocking MTOR substrate-recruitment site. Component of the mechanistic target of rapamycin complex 2 (mTORC2), consisting in two heterotretramers composed of MTOR, MLST8, RICTOR and MAPKAP1/SIN1. Interacts with PLPP7 and PML. Interacts with PRR5 and RICTOR; the interaction is direct within the mTORC2 complex and interaction with RICTOR is enhanced by deubiquitination of RICTOR by USP9X. mTORC1 and mTORC2 associate with DEPTOR, which regulates their activity. Interacts with WAC; WAC positively regulates MTOR activity by promoting the assembly of the TTT complex composed of TELO2, TTI1 and TTI2 and the RUVBL complex composed of RUVBL1 and RUVBL2 into the TTT-RUVBL complex which leads to the dimerization of the mTORC1 complex and its subsequent activation. Interacts with UBQLN1. Interacts with TTI1 and TELO2. Interacts with CLIP1; phosphorylates and regulates CLIP1. Interacts with NBN. Interacts with HTR6. Interacts with BRAT1. Interacts with MEAK7 (via C-terminal domain); the interaction increases upon nutrient stimulation. Interacts with TM4SF5; the interaction is positively regulated by arginine and is negatively regulated by leucine. Interacts with GPR137B. Interacts with NCKAP1L. Interacts with TPCN1 and TPCN2; the interaction is required for TPCN1 and TPCN2 sensitivity to ATP. Interacts with ATP6V1A and with CRYAB, forming a ternary complex. Interacts with SLC38A7; this interaction mediates the recruitment of mTORC1 to the lysosome and its subsequent activation. Interacts with TSPAN8. Post-translationally, autophosphorylates when part of mTORC1 or mTORC2. Phosphorylation at Ser-1261, Ser-2159 and Thr-2164 promotes autophosphorylation. Phosphorylated at Ser-2448 by RPS6KB1. Phosphorylation in the kinase domain modulates the interactions of MTOR with RPTOR and AKT1S1/PRAS40 and leads to increased intrinsic mTORC1 kinase activity. Phosphorylation at Ser-2159 by TBK1 in response to growth factors and pathogen recognition receptors promotes mTORC1 activity. Phosphorylation at Ser-2159 by TBK1 in response to EGF growth factor promotes mTORC2 activity, leading to AKT1 phosphorylation and activation. Phosphorylation at Thr-2173 in the ATP-binding region by AKT1 strongly reduces kinase activity. In terms of processing, ubiquitinated at Lys-2066 by the SCF(FBXO22) complex via 'Lys-27'-linked ubiquitination prevents mTORC1 substrate recruitment.

It localises to the lysosome membrane. Its subcellular location is the endoplasmic reticulum membrane. It is found in the golgi apparatus membrane. The protein resides in the cell membrane. The protein localises to the mitochondrion outer membrane. It localises to the cytoplasm. Its subcellular location is the nucleus. It is found in the PML body. The protein resides in the microsome membrane. The protein localises to the cytoplasmic vesicle. It localises to the phagosome. It catalyses the reaction L-seryl-[protein] + ATP = O-phospho-L-seryl-[protein] + ADP + H(+). The enzyme catalyses L-threonyl-[protein] + ATP = O-phospho-L-threonyl-[protein] + ADP + H(+). The catalysed reaction is L-tyrosyl-[protein] + ATP = O-phospho-L-tyrosyl-[protein] + ADP + H(+). The mTORC1 complex is activated in response to nutrients, growth factors or amino acids: activation requires relocalization of the mTORC1 complex to lysosomes that is mediated by the Ragulator complex, SLC38A9, and the Rag GTPases RagA/RRAGA, RagB/RRAGB, RagC/RRAGC and RagD/RRAGD. Activation of mTORC1 by growth factors such as insulin involves AKT1-mediated phosphorylation of TSC1-TSC2, which leads to the activation of the RHEB GTPase a potent activator of the protein kinase activity of mTORC1. Insulin-stimulated and amino acid-dependent phosphorylation at Ser-1261 promotes autophosphorylation and the activation of mTORC1. On the other hand, low cellular energy levels can inhibit mTORC1 through activation of PRKAA1 while hypoxia inhibits mTORC1 through a REDD1-dependent mechanism which may also require PRKAA1. The kinase activity of MTOR within the mTORC1 complex is positively regulated by MLST8. The kinase activity of MTOR is inhibited by DEPTOR and AKT1S1. The non-canonical mTORC1 complex is independent of the RHEB GTPase and specifically mediates phosphorylation of MiT/TFE factors TFEB and TFE3 but not other mTORC1 substrates: it is activated by FLCN, which activates Rag GTPases RagC/RRAGC and RagD/RRAGD. MTOR is the target of the immunosuppressive and anti-cancer drug rapamycin which acts in complex with FKBP1A/FKBP12, and specifically inhibits its kinase activity. mTORC2 is also activated by growth factors, but seems to be nutrient-insensitive. mTORC2 associates and is directly activated by ribosomes. mTORC2 may also be regulated by RHEB but in an indirect manner through the PI3K signaling pathway. Its function is as follows. Serine/threonine protein kinase which is a central regulator of cellular metabolism, growth and survival in response to hormones, growth factors, nutrients, energy and stress signals. MTOR directly or indirectly regulates the phosphorylation of at least 800 proteins. Functions as part of 2 structurally and functionally distinct signaling complexes mTORC1 and mTORC2 (mTOR complex 1 and 2). In response to nutrients, growth factors or amino acids, mTORC1 is recruited to the lysosome membrane and promotes protein, lipid and nucleotide synthesis by phosphorylating key regulators of mRNA translation and ribosome synthesis. This includes phosphorylation of EIF4EBP1 and release of its inhibition toward the elongation initiation factor 4E (eiF4E). Moreover, phosphorylates and activates RPS6KB1 and RPS6KB2 that promote protein synthesis by modulating the activity of their downstream targets including ribosomal protein S6, eukaryotic translation initiation factor EIF4B, and the inhibitor of translation initiation PDCD4. Stimulates the pyrimidine biosynthesis pathway, both by acute regulation through RPS6KB1-mediated phosphorylation of the biosynthetic enzyme CAD, and delayed regulation, through transcriptional enhancement of the pentose phosphate pathway which produces 5-phosphoribosyl-1-pyrophosphate (PRPP), an allosteric activator of CAD at a later step in synthesis, this function is dependent on the mTORC1 complex. Regulates ribosome synthesis by activating RNA polymerase III-dependent transcription through phosphorylation and inhibition of MAF1 an RNA polymerase III-repressor. Activates dormant ribosomes by mediating phosphorylation of SERBP1, leading to SERBP1 inactivation and reactivation of translation. In parallel to protein synthesis, also regulates lipid synthesis through SREBF1/SREBP1 and LPIN1. To maintain energy homeostasis mTORC1 may also regulate mitochondrial biogenesis through regulation of PPARGC1A. In the same time, mTORC1 inhibits catabolic pathways: negatively regulates autophagy through phosphorylation of ULK1. Under nutrient sufficiency, phosphorylates ULK1 at 'Ser-758', disrupting the interaction with AMPK and preventing activation of ULK1. Also prevents autophagy through phosphorylation of the autophagy inhibitor DAP. Also prevents autophagy by phosphorylating RUBCNL/Pacer under nutrient-rich conditions. Prevents autophagy by mediating phosphorylation of AMBRA1, thereby inhibiting AMBRA1 ability to mediate ubiquitination of ULK1 and interaction between AMBRA1 and PPP2CA. mTORC1 exerts a feedback control on upstream growth factor signaling that includes phosphorylation and activation of GRB10 a INSR-dependent signaling suppressor. Among other potential targets mTORC1 may phosphorylate CLIP1 and regulate microtubules. The mTORC1 complex is inhibited in response to starvation and amino acid depletion. The non-canonical mTORC1 complex, which acts independently of RHEB, specifically mediates phosphorylation of MiT/TFE factors TFEB and TFE3 in the presence of nutrients, promoting their cytosolic retention and inactivation. Upon starvation or lysosomal stress, inhibition of mTORC1 induces dephosphorylation and nuclear translocation of TFEB and TFE3, promoting their transcription factor activity. The mTORC1 complex regulates pyroptosis in macrophages by promoting GSDMD oligomerization. MTOR phosphorylates RPTOR which in turn inhibits mTORC1. As part of the mTORC2 complex, MTOR transduces signals from growth factors to pathways involved in proliferation, cytoskeletal organization, lipogenesis and anabolic output. In response to growth factors, mTORC2 phosphorylates and activates AGC protein kinase family members, including AKT (AKT1, AKT2 and AKT3), PKC (PRKCA, PRKCB and PRKCE) and SGK1. In contrast to mTORC1, mTORC2 is nutrient-insensitive. mTORC2 plays a critical role in AKT1 activation by mediating phosphorylation of different sites depending on the context, such as 'Thr-450', 'Ser-473', 'Ser-477' or 'Thr-479', facilitating the phosphorylation of the activation loop of AKT1 on 'Thr-308' by PDPK1/PDK1 which is a prerequisite for full activation. mTORC2 also regulates the phosphorylation of SGK1 at 'Ser-422'. mTORC2 may regulate the actin cytoskeleton, through phosphorylation of PRKCA, PXN and activation of the Rho-type guanine nucleotide exchange factors RHOA and RAC1A or RAC1B. The mTORC2 complex also phosphorylates various proteins involved in insulin signaling, such as FBXW8 and IGF2BP1. May also regulate insulin signaling by acting as a tyrosine protein kinase that catalyzes phosphorylation of IGF1R and INSR. Regulates osteoclastogenesis by adjusting the expression of CEBPB isoforms. Plays an important regulatory role in the circadian clock function; regulates period length and rhythm amplitude of the suprachiasmatic nucleus (SCN) and liver clocks. The chain is Serine/threonine-protein kinase mTOR from Mus musculus (Mouse).